The chain runs to 211 residues: Superoxide dismutase [Mn], mitochondrial (211 aa).

The N-terminal 24 residues, 1 to 24 (MLCRAVCSASRRLAPALGILGVRQ), are a transit peptide targeting the mitochondrion. Residue His50 coordinates Mn(2+). Tyr58 is modified (3'-nitrotyrosine). An N6-acetyllysine; alternate mark is found at Lys68 and Lys75. An N6-succinyllysine; alternate mark is found at Lys68 and Lys75. His98 is a binding site for Mn(2+). Lys114 carries the post-translational modification N6-acetyllysine. Residues Lys122 and Lys130 each carry the N6-acetyllysine; alternate modification. N6-succinyllysine; alternate is present on residues Lys122 and Lys130. Positions 183 and 187 each coordinate Mn(2+). Position 202 is an N6-acetyllysine (Lys202).

Belongs to the iron/manganese superoxide dismutase family. As to quaternary structure, homotetramer. Requires Mn(2+) as cofactor. Nitrated under oxidative stress. Nitration coupled with oxidation inhibits the catalytic activity. In terms of processing, acetylation at Lys-122 decreases enzymatic activity. Deacetylated by SIRT3 upon exposure to ionizing radiations or after long fasting. Post-translationally, polyubiquitinated; leading to proteasomal degradation. Deubiquitinated by USP36 which increases protein stability.

It localises to the mitochondrion matrix. It carries out the reaction 2 superoxide + 2 H(+) = H2O2 + O2. Functionally, destroys superoxide anion radicals which are normally produced within the cells and which are toxic to biological systems. In Cavia porcellus (Guinea pig), this protein is Superoxide dismutase [Mn], mitochondrial (SOD2).